The chain runs to 336 residues: F420-dependent glucose-6-phosphate dehydrogenase (336 aa).

Asp-39 contacts coenzyme F420-(gamma-Glu)n. Catalysis depends on His-40, which acts as the Proton donor. Coenzyme F420-(gamma-Glu)n-binding positions include Thr-76 and 107–108 (TG). Catalysis depends on Glu-109, which acts as the Proton acceptor. Coenzyme F420-(gamma-Glu)n-binding positions include Asn-112, 177–178 (GG), and 180–181 (QV). The substrate site is built by Thr-195, Lys-198, Lys-259, and Arg-283.

The protein belongs to the F420-dependent glucose-6-phosphate dehydrogenase family. In terms of assembly, homodimer.

The catalysed reaction is oxidized coenzyme F420-(gamma-L-Glu)(n) + D-glucose 6-phosphate + H(+) = 6-phospho-D-glucono-1,5-lactone + reduced coenzyme F420-(gamma-L-Glu)(n). Functionally, catalyzes the coenzyme F420-dependent oxidation of glucose 6-phosphate (G6P) to 6-phosphogluconolactone. Appears to have a role in resistance to oxidative stress, via its consumption of G6P that serves as a source of reducing power to combat oxidative stress in mycobacteria. The protein is F420-dependent glucose-6-phosphate dehydrogenase of Mycolicibacterium gilvum (strain PYR-GCK) (Mycobacterium gilvum (strain PYR-GCK)).